The chain runs to 4158 residues: MTFRATDSEFDLTNIEEYAENSALSRLNNIKAKQRVSYVTSTENESDTQILTFRHITKAQEKTRKRQQPIKLEPLPVLKVYQDHKQPEYIHEQNRFQLMTAGIIKRPVSIAKKSFATSSTQFLEHQDAVKKMQIHRPYVEVFSPSPPKLPHTGIGKRGLFGTRSSAYPKYTFHDREEVVKANIRDPLQIIKIIRENEHLGFLYMIPAVPRSSIEYDTYNLKVVSYENINKNDYYTISQRAVTHIYNEDIEFIEIDRWEQEYLYHRELTKIPIFSLFRKWKAFSVWRKNVRSKKITGCQKSLQKNLFIVNPHLRPALLKINELCYHLSFMGLCYIEKCHTYTLQEFKAAQVIRLAEVTERLGEFRNEAKYVVRRACRFALRAAGFVPDDCAFGPFEDYHKVQSSGSFINTPHELPTYGDSEKMTYTEQASKRHYCMRLTCFIRLNDYLIENTMHILTVNAVNSLLNHLTDKLKRTPSADVIQKWITEEKPEVPDKKGTLMVEKQEEDESLIPMFLTELMLTVQSLLFEPSLEDFLDGILGAVNHCQNTVLSVPNLVPDSYFDAFTSPYINNKLEGKTCGTGPSLAAVFEDDKNFHTIISQIKETIQAAFESARIYAATFEKFQIFFKENESLDLQALKLQEPDINFFSEQLEKYHKQHKDAVALRPTRNVGLLLIDTRLLREKLIPSPLRCLEVLNFMLPRQSKKKVDAIIFEAQDAEYKLEFVPTTTTEYVHSLLFLDEIQERIESLEDEGNIVTQMYKLMEQYQVPTPPEDFAVFATMKPSIVAVRNAIDKSVGDRESSIKQFCVHLGSDLEELNNEVNEVKLQAQDPQILDISADQDKIRLILNNLQSVLADLQKRAFQYKSYQKNFKVEVSKFEALEEVSAELKLKQLLWDSFSEWDKLQQEWLKSKFDCLDPEVLNGQVSKYAKFVTQLEKGLPPNSVVPQLKYKVEKMKEKLPVIIDLRNPTLKARHWAAIEQTVDATLVDAEIPLTLERLSQLHVFDFGQEIQDISGQASGEAALEAILKKVEDSWKTTEFVILPHRDSKDVFILGGTDDIQVLLDDSTINVATLASSRYLGPLKTRVDEWQKQLALFNQTLEEWLTCQRNWLYLESIFNAPDIQRQLPAEAKMFLQVDKSWKEIMRKVNRLPNALRAATQPGLLETFQNNNALLDQIQKCLEAYLESKRVIFPRFYFLSNDELLEILAQTRNPQAVQPHLRKCFDSISKLEFALMPPAEGKIPGIDGEPEKVYTNDILAMLSPEGERVSLGKGLKARGNVEEWLGKVEEAMFTSLRRLCKAAIADYQGKLRTDWVVAGHPSQVILTVSQIMWCRDLTECLETEHSNHIQALKNFEKVNFERLNALAAIVQGSLPKLHRNILTALITIDVHARDIVTELVQSKVETVESFDWQRQLRYYWDIDLDNCVARMALSQYTYGYEYLGACPRLVITPLTDRCYLCLMGALQLDLGGAPAGPAGTGKTETTKDLAKALAIQCVVFNCSDGLDYKMMGRFFSGLAQSGAWCCFDEFNRIDIEVLSVIAQQLITIRNAKAAKLSRFMFEGREIKLVMTCAAFITMNPGYAGRTELPDNLKALFRPFAMMVPNYALIAEVILYSEGFESSKILARKMTQMYKLCSEQLSQQDHYDFGMRAVKSVLVMAGSLKRENPDLNEDVVLIRALQDSNLPKFLTDDALLFSGIISDLFPGVQIPEHDYGILQSTIVDVMNRQNLQPEMCMVRKVIQFYETMLVRHGVMLVGPTGGGKTTVYRILAETLGNLQKLGIENSFYQAVKTYVLNPKSITMGELYGEVNNLTLEWKDGLMALSVRAAVNDTSEDHKWIISDGPVDALWIENMNTVLDDNKMLCLANSERIKLTPQIHMLFEVQDLRVASPATVSRCGMVFVDPEELKWMPYVKTWMKGISKKLTEETQEYILNLFQRYVDEGLHFINKKCSQAIPQVDISKVTTLCCLLESLILGKDGVNLAMEQTKLNTILCQTFVFCYLWSLGGNLTENYYDSFDTFIRTQFDDNPDARLPNSGDLWSIHMDFDTKRLDPWERIIPTFKYNRDVPFFEMLVPTTDTVRYGYLMEKLLAVKHSVLFTGITGVGKSVIAKGLLNKIQESAGYVPVYLNFSAQTSSARTQEIIESKLERKRKNILGAPGNKRIVIFVDDLNMPRLDRYGSQPPIELLRQYQDFGGFYDRNKLFWKEIQDVTIISACAPPGGGRNPVTPRFIRHFSMLCLPMPSEHSLKQIFQAILNGFLSDFPPAVKQTASSIVEASVEIYNKMSVDLLPTPAKSHYVFNLRDLSKCVQGILQCDPGTIREEIQIFRLFCHECQRVFHDRLINNEDKHYFHVILTEMANKHFGIAIDLEYFLNKPIIFGDFIKFGADKADRIYDDMPDIEKTANVLQDYLDDYNLTNPKEVKLVFFQDAIEHVSRIARMIRQERGNALLVGVGGTGKQSLTRLAAHICGYKCLQIELSRGYNYDSFHEDLRKLYKMAGVEDKNMVFLFTDTQIVVEEFLEDINNILNSGEVPNLFEKDELEQVLAATRPRAKEVGISEGNRDEVFQYFISKVRQKLHIVLCMSPVGEAFRSRCRMFPSLVNCCTIDWFVQWPREALLSVSKTFFSQVDAGNEELKEKLPLMCVNVHLSVSSMAERYYNELRRRYYTTPTSYLELINLYLSMLSEKRKQIISARDRVKNGLTKLLETNILVDKMKLDLSALEPVLLAKSEDVEALMEKLAVDQESADQVRNTVQEDEATAKVKAEETQAIADDAQRDLDEALPALDAANKALDSLDKADISEIRVFTKPPDLVMTVMEAISILLNAKPDWPSAKQLLGDSNFLKRLLEYDKENIKPQILAKLQKYINNPDFVPEKVEKVSKACKSMCMWVRAMDLYSRVVKVVEPKRQKLRAAQAELDITMATLREKQALLRQVEDQIQALQDEYDKGVNEKESLAKTMALTKARLVRAGKLTAALEDEQVRWEESIQKFEEEISNITGNVFIAAACVAYYGAFTAQYRQSLIECWIQDCQSLEIPIDPSFSLINILGDPYEIRQWNTDGLPRDLISTENGILVTQGRRWPLMIDPQDQANRWIRNKESKSGLKIIKLTDSNFLRILENSIRLGLPVLLEELKETLDPALEPILLKQIFISGGRLLIRLGDSDIDYDKNFRFYMTTKMPNPHYLPEVCIKVTIINFTVTKSGLEDQLLSDVVRLEKPRLEEQRIKLIVRINTDKNQLKTIEEKILRMLFTSEGNILDNEELIDTLQDSKITSGAIKTRLEEAESTEQMINVAREKYRPVATQGSVMYFVIASLSEIDPMYQYSLKYFKQLFNTTIETSVKTENLQQRLDVLLEQTLLTAYVNVSRGLFEQHKLIYSFMLCVEMMRQQGTLSDAEWNFFLRGSAGLEKERPPKPEAPWLPTATWFACCDLEESFPVFHGLTQNILSHPISIRLGSFETYINPQKWEGYSKMKHEDKHMRQEKEAAHQDPWSAGLSSFHKLILIKCCKEEKVVFALTDFVIENLGKQFIETPPVDLPTLYQDMSCNTPLVFILSTGSDPMGAFQRFARESGYSERVQSISLGQGQGPIAEKMVKDAMKSGNWVFLQNCHLAVSWMLAMEELIKTFTDPDSAIKDTFRLFLSSMPSNTFPVTVLQNSVKVTNEPPKGLRANIRRAFTEMTPSFFEENILGKKWRQIIFGICFFHAIIQERKKFGPLGWNICYEFNDSDRECALLNLKLYCKEGKIPWDALIYITGEITYGGRVTDSWDQRCLRTILKRFFSPETLEEDYKYSESGIYFAPMADSLQEFKDYIENLPLIDDPEIFGMHENANLVFQYKETSTLINTILEVQPRSSTGGEGKSNDEIVQELVASVQTRVPEKLEMEGASESLFVKDLQGRLNSLTTVLGQEVDRFNNLLKLIHTSLETLNKAIAGFVVMSEEMEKVYNSFLNNQVPALWSNTAYPSLKPLGSWVKDLILRTSFVDLWLKRGQPKSYWISGFFFPQGFLTGTLQNHARKYNLPIDELSFKYSVIPTYRDQAAVIEAAKTVQFGQELPMDMELPSPEDGVLVHGMFMDASRWDDKEMVIEDALPGQMNPVLPVVHFEPQQNYKPSPTLYHCPLYKTGARAGTLSTTGHSTNFVVTVLLPSKRSKDYWIAKGSALLCQLSE.

The tract at residues 1-1433 (MTFRATDSEF…VARMALSQYT (1433 aa)) is stem. An ATP-binding site is contributed by 192–199 (IIRENEHL). The stretch at 805 to 859 (CVHLGSDLEELNNEVNEVKLQAQDPQILDISADQDKIRLILNNLQSVLADLQKRA) forms a coiled coil. AAA stretches follow at residues 1434-1655 (YGYE…VLVM), 1715-1948 (STIV…KKCS), 2058-2306 (KYNR…CVQG), and 2408-2659 (DYNL…LRRR). ATP-binding positions include 1472-1479 (GPAGTGKT), 1753-1760 (GPTGGGKT), 2096-2103 (GITGVGKS), and 2447-2454 (GVGGTGKQ). Residues 2676-2961 (SMLSEKRKQI…KTMALTKARL (286 aa)) are stalk. A coiled-coil region spans residues 2901-2996 (KRQKLRAAQA…EEISNITGNV (96 aa)). AAA stretches follow at residues 3042-3272 (LGDP…AIKT) and 3509-3730 (LTDF…NLKL).

This sequence belongs to the dynein heavy chain family. As to quaternary structure, the dynein complex consists of at least two heavy chains and a number of intermediate and light chains. Expressed in several tissues, including brain, pituitary, testis and trachea, with highest levels in testis.

Its subcellular location is the cytoplasm. The protein localises to the cytoskeleton. The protein resides in the cilium axoneme. Force generating protein of respiratory cilia. Produces force towards the minus ends of microtubules. Dynein has ATPase activity; the force-producing power stroke is thought to occur on release of ADP. The chain is Dynein axonemal heavy chain 6 from Homo sapiens (Human).